The sequence spans 95 residues: Aspartyl/glutamyl-tRNA(Asn/Gln) amidotransferase subunit C (95 aa).

The protein belongs to the GatC family. Heterotrimer of A, B and C subunits.

It catalyses the reaction L-glutamyl-tRNA(Gln) + L-glutamine + ATP + H2O = L-glutaminyl-tRNA(Gln) + L-glutamate + ADP + phosphate + H(+). The enzyme catalyses L-aspartyl-tRNA(Asn) + L-glutamine + ATP + H2O = L-asparaginyl-tRNA(Asn) + L-glutamate + ADP + phosphate + 2 H(+). Its function is as follows. Allows the formation of correctly charged Asn-tRNA(Asn) or Gln-tRNA(Gln) through the transamidation of misacylated Asp-tRNA(Asn) or Glu-tRNA(Gln) in organisms which lack either or both of asparaginyl-tRNA or glutaminyl-tRNA synthetases. The reaction takes place in the presence of glutamine and ATP through an activated phospho-Asp-tRNA(Asn) or phospho-Glu-tRNA(Gln). The polypeptide is Aspartyl/glutamyl-tRNA(Asn/Gln) amidotransferase subunit C (Dechloromonas aromatica (strain RCB)).